The primary structure comprises 176 residues: Peptide methionine sulfoxide reductase MsrA (176 aa).

C10 is an active-site residue.

This sequence belongs to the MsrA Met sulfoxide reductase family.

The enzyme catalyses L-methionyl-[protein] + [thioredoxin]-disulfide + H2O = L-methionyl-(S)-S-oxide-[protein] + [thioredoxin]-dithiol. The catalysed reaction is [thioredoxin]-disulfide + L-methionine + H2O = L-methionine (S)-S-oxide + [thioredoxin]-dithiol. In terms of biological role, has an important function as a repair enzyme for proteins that have been inactivated by oxidation. Catalyzes the reversible oxidation-reduction of methionine sulfoxide in proteins to methionine. This chain is Peptide methionine sulfoxide reductase MsrA, found in Leptospira borgpetersenii serovar Hardjo-bovis (strain L550).